The primary structure comprises 316 residues: Protoheme IX farnesyltransferase (316 aa).

8 consecutive transmembrane segments (helical) span residues 35 to 55, 56 to 76, 119 to 139, 156 to 176, 183 to 203, 229 to 246, 250 to 272, and 283 to 303; these read VMVL…GHVQ, PAIG…SGCL, VVLG…TIVF, IVIG…VVTG, LILF…LALI, IVWY…PVAL, GLVY…IRVL, and AAMG…SALL.

Belongs to the UbiA prenyltransferase family. Protoheme IX farnesyltransferase subfamily.

It localises to the cell inner membrane. The catalysed reaction is heme b + (2E,6E)-farnesyl diphosphate + H2O = Fe(II)-heme o + diphosphate. It functions in the pathway porphyrin-containing compound metabolism; heme O biosynthesis; heme O from protoheme: step 1/1. In terms of biological role, converts heme B (protoheme IX) to heme O by substitution of the vinyl group on carbon 2 of heme B porphyrin ring with a hydroxyethyl farnesyl side group. This is Protoheme IX farnesyltransferase from Methylobacterium radiotolerans (strain ATCC 27329 / DSM 1819 / JCM 2831 / NBRC 15690 / NCIMB 10815 / 0-1).